The following is a 562-amino-acid chain: Dihydroxy-acid dehydratase 2 (562 aa).

C50 is a binding site for [2Fe-2S] cluster. Residue D82 coordinates Mg(2+). [2Fe-2S] cluster is bound at residue C123. 3 residues coordinate Mg(2+): D124, K125, and E447. K125 is subject to N6-carboxylysine. Catalysis depends on S473, which acts as the Proton acceptor.

Belongs to the IlvD/Edd family. In terms of assembly, homodimer. It depends on [2Fe-2S] cluster as a cofactor. The cofactor is Mg(2+).

It catalyses the reaction (2R)-2,3-dihydroxy-3-methylbutanoate = 3-methyl-2-oxobutanoate + H2O. It carries out the reaction (2R,3R)-2,3-dihydroxy-3-methylpentanoate = (S)-3-methyl-2-oxopentanoate + H2O. The protein operates within amino-acid biosynthesis; L-isoleucine biosynthesis; L-isoleucine from 2-oxobutanoate: step 3/4. It functions in the pathway amino-acid biosynthesis; L-valine biosynthesis; L-valine from pyruvate: step 3/4. In terms of biological role, functions in the biosynthesis of branched-chain amino acids. Catalyzes the dehydration of (2R,3R)-2,3-dihydroxy-3-methylpentanoate (2,3-dihydroxy-3-methylvalerate) into 2-oxo-3-methylpentanoate (2-oxo-3-methylvalerate) and of (2R)-2,3-dihydroxy-3-methylbutanoate (2,3-dihydroxyisovalerate) into 2-oxo-3-methylbutanoate (2-oxoisovalerate), the penultimate precursor to L-isoleucine and L-valine, respectively. The chain is Dihydroxy-acid dehydratase 2 from Bordetella pertussis (strain Tohama I / ATCC BAA-589 / NCTC 13251).